Reading from the N-terminus, the 78-residue chain is Calcium/calmodulin-dependent protein kinase II inhibitor 1 (78 aa).

Positions 41–68 are CAMK2 inhibitory domain; sequence SKRPPKLGQIGRSKRVVIEDDRIDDVLK.

The protein belongs to the CAMK2N family. Interacts with CAMK2B; the presence of Ca(2+)/calmodulin increases the interaction but is not essential. Interacts with CAMK2A; this interaction requires CAMK2A activation by Ca(2+). Expressed in the brain (at protein level). Expressed in cardiomyocytes but not cardiac fibroblasts (at protein level).

The protein resides in the synapse. The protein localises to the cell projection. It localises to the dendrite. It is found in the postsynaptic density. In terms of biological role, potent and specific inhibitor of CaM-kinase II (CAMK2). Plays a role in the maintenance of long-term retrieval-induced memory in response to contextual fear. Modulates blood pressure and vascular reactivity via regulation of CAMK2 activity in addition to regulation of left ventricular mass. Mediates the NLRP3 inflammasome in cardiomyocytes via acting as an inhibitor of the MAPK14/p38 and MAPK8/JNK pathways, thereby regulating ventricular remodeling and cardiac rhythm post-myocardial infarction. Negatively effects insulin sensitivity and promotes lipid formation in adipose tissues independent of CAMK2 signaling. The protein is Calcium/calmodulin-dependent protein kinase II inhibitor 1 (Camk2n1) of Mus musculus (Mouse).